We begin with the raw amino-acid sequence, 547 residues long: Chaperonin GroEL (547 aa).

ATP-binding positions include 30-33, lysine 51, 87-91, glycine 415, and aspartate 496; these read TLGP and DGTTT. The disordered stretch occupies residues 527-547; that stretch reads ENTPDMPAMPPGGMGGMGGMY. The span at 538–547 shows a compositional bias: gly residues; that stretch reads GGMGGMGGMY.

The protein belongs to the chaperonin (HSP60) family. In terms of assembly, forms a cylinder of 14 subunits composed of two heptameric rings stacked back-to-back. Interacts with the co-chaperonin GroES.

The protein localises to the cytoplasm. The catalysed reaction is ATP + H2O + a folded polypeptide = ADP + phosphate + an unfolded polypeptide.. In terms of biological role, together with its co-chaperonin GroES, plays an essential role in assisting protein folding. The GroEL-GroES system forms a nano-cage that allows encapsulation of the non-native substrate proteins and provides a physical environment optimized to promote and accelerate protein folding. In Chlorobium phaeovibrioides (strain DSM 265 / 1930) (Prosthecochloris vibrioformis (strain DSM 265)), this protein is Chaperonin GroEL.